Reading from the N-terminus, the 612-residue chain is MIIRHLSENIINQIAAGEVIERPANVVKELVENAIDAGATRIEIVTANGGKSFIKVSDNGCGIPADQLTLAISRHCTSKITDDVHNIYFLGFRGEALPSIGSVAKLKLTSRTQEAENATEIIVTAGKIIGPKPAAANPGTIVEVRDLFFVTPARLKFMKTDRAETNAISDMIKRIAIAFPHIRFSLSGLDRTSMELPATANSTQGQLQRITQIMGKEFAPNSIALNAKRESIRLTGFACLPSFNRSNSLHQFAYVNRRPVRDKFLWGTIRGAYADVMARDRYPVSILFIDLPPADVDVNVHPTKADVRFRDPGLIRGLIVGAIHEALHQIGVRPASTCSEAMLSAFQTSQPLGTFKSTHQTFSSQHHHLASAAASPLHKPLDATNFVNLREEAVPLMECLDMPSGDICTANTTPSSEELHYPLGAARAQIHKNYIIAQTQDSLIIVDQHAAHERLVYEALKDALYSKPLPSQLLLIPEIVELSEEDATCLLTHKDALQKFGLGIESFGPGAIVVRETPSMLGEVNVQALIKDLADEAAEYDTTNNLKAMIDCVAATMACHGSIRSGRLLRAEEMNALLRQIEATPHTGTCNHGRPTYIELKLADIERLFGRK.

It belongs to the DNA mismatch repair MutL/HexB family.

Its function is as follows. This protein is involved in the repair of mismatches in DNA. It is required for dam-dependent methyl-directed DNA mismatch repair. May act as a 'molecular matchmaker', a protein that promotes the formation of a stable complex between two or more DNA-binding proteins in an ATP-dependent manner without itself being part of a final effector complex. This Bartonella quintana (strain Toulouse) (Rochalimaea quintana) protein is DNA mismatch repair protein MutL.